The primary structure comprises 248 residues: Ribonuclease 3 (248 aa).

Residues 6–136 (LAYLQTLIGS…LIGAIYLDKG (131 aa)) form the RNase III domain. Glutamate 49 serves as a coordination point for Mg(2+). The active site involves aspartate 53. Mg(2+) is bound by residues aspartate 122 and glutamate 125. Glutamate 125 is a catalytic residue. The DRBM domain occupies 163–231 (NYKSCLIEYS…AKEAMERIIA (69 aa)).

The protein belongs to the ribonuclease III family. In terms of assembly, homodimer. Mg(2+) is required as a cofactor.

It localises to the cytoplasm. It catalyses the reaction Endonucleolytic cleavage to 5'-phosphomonoester.. In terms of biological role, digests double-stranded RNA. Involved in the processing of primary rRNA transcript to yield the immediate precursors to the large and small rRNAs (23S and 16S). Processes some mRNAs, and tRNAs when they are encoded in the rRNA operon. Processes pre-crRNA and tracrRNA of type II CRISPR loci if present in the organism. The sequence is that of Ribonuclease 3 from Chlorobium chlorochromatii (strain CaD3).